The sequence spans 170 residues: Putative beta-eliminating lyase-like protein (170 aa).

Lysine 32 carries the N6-(pyridoxal phosphate)lysine modification.

The protein belongs to the beta-eliminating lyase family. Pyridoxal 5'-phosphate is required as a cofactor.

The protein is Putative beta-eliminating lyase-like protein of Dictyostelium discoideum (Social amoeba).